A 566-amino-acid chain; its full sequence is ALBINO3-like protein 3, mitochondrial (566 aa).

The transit peptide at 1–44 directs the protein to the mitochondrion; it reads MAFRRVLLSHLRRSHHTCSSLSPHHVSATTQPSIALALFQSRFF. 4 helical membrane-spanning segments follow: residues 139 to 159, 207 to 227, 249 to 269, and 301 to 321; these read WVVIATSTVAFRTALLPILIL, LWVPAYFSIQISCFFLWITSI, LTEIPNGLYGPLFPFLIAGLH, and LLTCALYFLSFQMPQGSLLYW. 4 TPR repeats span residues 386 to 419, 420 to 453, 465 to 498, and 507 to 540; these read PKELVALSAKYLSGGHKDKSIPLLRLALEKDPEY, LQAMIILGQALYQKDQFAEAAKCLEQAASKLLDT, IVASQWAGVSNIRQGKTSEGITHLERVANMKEPD, and LDALVLYSSAIFNEGRREEAAKYLRRVVAYDPSF. Residues 547–566 form a disordered region; the sequence is CEEDDTIPTSSSSNSTSKTS. Residues 555-566 show a composition bias toward low complexity; that stretch reads TSSSSNSTSKTS.

This sequence belongs to the OXA1/ALB3/YidC (TC 2.A.9.2) family.

The protein localises to the mitochondrion inner membrane. In terms of biological role, probably required for the insertion of integral membrane proteins into the mitochondrial inner membrane. This chain is ALBINO3-like protein 3, mitochondrial (ALB3L3), found in Arabidopsis thaliana (Mouse-ear cress).